A 264-amino-acid chain; its full sequence is MKKISIHDLMKWKQEGKKFATVTAYDASFAQLFEQQEVPVLLVGDSLGMVLQGKSDTLPVTTEEIAYHTRCVRAGSPNSLLMADMPFMSYATPEQACENAGKLMQAGANMVKIEGGEWIAETVRVLAERAVPVCAHLGLTPQSVNIFGGFRIQGRDEAKAEQMVKDALTLEAAGAQIILLECVPASLAERITKACTVPVIGIGAGNVTDGQILVMHDMFGISANYMPKFSKNFLAETGDMRKAVTKYIQDVEQGVFPVAEHTFN.

2 residues coordinate Mg(2+): D45 and D84. 3-methyl-2-oxobutanoate-binding positions include D45–S46, D84, and K112. E114 contributes to the Mg(2+) binding site. The active-site Proton acceptor is E181.

This sequence belongs to the PanB family. As to quaternary structure, homodecamer; pentamer of dimers. Mg(2+) serves as cofactor.

The protein localises to the cytoplasm. The catalysed reaction is 3-methyl-2-oxobutanoate + (6R)-5,10-methylene-5,6,7,8-tetrahydrofolate + H2O = 2-dehydropantoate + (6S)-5,6,7,8-tetrahydrofolate. It participates in cofactor biosynthesis; (R)-pantothenate biosynthesis; (R)-pantoate from 3-methyl-2-oxobutanoate: step 1/2. Its function is as follows. Catalyzes the reversible reaction in which hydroxymethyl group from 5,10-methylenetetrahydrofolate is transferred onto alpha-ketoisovalerate to form ketopantoate. The protein is 3-methyl-2-oxobutanoate hydroxymethyltransferase 1 of Aliivibrio fischeri (strain ATCC 700601 / ES114) (Vibrio fischeri).